A 395-amino-acid chain; its full sequence is Proteinase-activated receptor 2 (395 aa).

An N-terminal signal peptide occupies residues 1-25 (MRSPSAAWLLGGVLLLAASGSCNRT). N23 and N29 each carry an N-linked (GlcNAc...) asparagine glycan. A propeptide spans 26–34 (VPGNKSKGR) (removed for receptor activation). Topologically, residues 35–69 (SLIGNVDNSPVVAGRGVTVKPGFSVDEFSTSVLTG) are extracellular. The chain crosses the membrane as a helical span at residues 70-99 (KLTTVFLPVVYTIVFVVGLPSNGMALWVFL). Over 100–106 (FRTKKKH) the chain is Cytoplasmic. The chain crosses the membrane as a helical span at residues 107-135 (PAVIYMANLALADLLSVTWFPLKIAYHIH). Topologically, residues 136 to 147 (GNNWIYGESLCK) are extracellular. C146 and C224 form a disulfide bridge. A helical membrane pass occupies residues 148–175 (VLIGFFYGNMYCSILFMTCLSVQRYWVI). Residues 176–181 (VNPMVH) are Cytoplasmic-facing. Residues 182–209 (PKKQANIAIGVSLGIWLLILLLTIPLYV) form a helical membrane-spanning segment. Topologically, residues 210–233 (VKQTSYIRALNITTCHDVLPEEVL) are extracellular. Residue N220 is glycosylated (N-linked (GlcNAc...) asparagine). Residues 234 to 267 (VGDMFNYFLSLAIGVFLFPAFLTASAYVLMIRTL) traverse the membrane as a helical segment. Topologically, residues 268–275 (QSSAMDES) are cytoplasmic. A helical transmembrane segment spans residues 276-315 (SGKKRRRAIKLIVTVLAMYLICFTPSNLLLVVHYFLIKTR). Residues 316 to 321 (GQSHVY) are Extracellular-facing. A helical membrane pass occupies residues 322 to 345 (ALYIVALCLSTLNSCIDPFVYYFI). At 346–395 (SQDFRDHAKNALLCRSVRTVKRMQVSLSSKKFSGKSSSYSSSSTSVKGSY) the chain is on the cytoplasmic side. C359 carries the S-palmitoyl cysteine lipid modification.

It belongs to the G-protein coupled receptor 1 family. In terms of assembly, interacts with TLR4, COPS5 and TMED2. Interacts with GNAQ, GNA11, GNA12, GNA13 and GNA14. In terms of processing, a proteolytic cleavage generates a new N-terminus that functions as a tethered ligand. Activating serine proteases include trypsin, mast cell tryptase, coagulation factors VII and Xa, myeloblastin/PRTN3 and membrane-type serine protease 1/ST14. Proposed subsequent cleavage by serine proteases is leading to receptor deactivation and include neutrophil elastase and cathepsin G. At least in part, implicated proteases are also shown to activate the receptor; the glycosylation status of the receptor is thought to contribute to the difference. N-glycosylated and sialylated. Post-translationally, multiple phosphorylated on serine and threonine residues in the cytoplasmic region upon receptor activation; required for receptor desensitization and recruitment of beta-arrestin. In terms of processing, monoubiquitinated by CBL at the plasma membrane and in early endosomes; not required for receptor endocytosis but for translocation to late endosomes or lysosomes. Deubiquitination involves STAMBP and USP8; required for lysosomal trafficking and receptor degradation.

Its subcellular location is the cell membrane. Its function is as follows. Receptor for trypsin and trypsin-like enzymes coupled to G proteins. Its function is mediated through the activation of several signaling pathways including phospholipase C (PLC), intracellular calcium, mitogen-activated protein kinase (MAPK), I-kappaB kinase/NF-kappaB and Rho. Can also be transactivated by cleaved F2R/PAR1. Involved in modulation of inflammatory responses and regulation of innate and adaptive immunity, and acts as a sensor for proteolytic enzymes generated during infection. Generally is promoting inflammation. Can signal synergistically with TLR4 and probably TLR2 in inflammatory responses and modulates TLR3 signaling. Has a protective role in establishing the endothelial barrier; the activity involves coagulation factor X. Regulates endothelial cell barrier integrity during neutrophil extravasation, probably following proteolytic cleavage by PRTN3. Proposed to have a bronchoprotective role in airway epithelium, but also shown to compromise the airway epithelial barrier by interrupting E-cadherin adhesion. Involved in the regulation of vascular tone; activation results in hypotension presumably mediated by vasodilation. Associates with a subset of G proteins alpha subunits such as GNAQ, GNA11, GNA14, GNA12 and GNA13, but probably not with G(o) alpha, G(i) subunit alpha-1 and G(i) subunit alpha-2. Believed to be a class B receptor which internalizes as a complex with arrestin and traffic with it to endosomal vesicles, presumably as desensitized receptor, for extended periods of time. Mediates inhibition of TNF-alpha stimulated JNK phosphorylation via coupling to GNAQ and GNA11; the function involves dissociation of RIPK1 and TRADD from TNFR1. Mediates phosphorylation of nuclear factor NF-kappa-B RELA subunit at 'Ser-536'; the function involves IKBKB and is predominantly independent of G proteins. Involved in cellular migration. Involved in cytoskeletal rearrangement and chemotaxis through beta-arrestin-promoted scaffolds; the function is independent of GNAQ and GNA11 and involves promotion of cofilin dephosphorylation and actin filament severing. Induces redistribution of COPS5 from the plasma membrane to the cytosol and activation of the JNK cascade is mediated by COPS5. Involved in the recruitment of leukocytes to the sites of inflammation and is the major PAR receptor capable of modulating eosinophil function such as pro-inflammatory cytokine secretion, superoxide production and degranulation. During inflammation promotes dendritic cell maturation, trafficking to the lymph nodes and subsequent T-cell activation. Involved in antimicrobial response of innate immune cells; activation enhances phagocytosis of Gram-positive and killing of Gram-negative bacteria. Acts synergistically with interferon-gamma in enhancing antiviral responses. Probably mediates activation of pro-inflammatory and pro-fibrotic responses in fibroblasts, triggered by coagulation factor Xa (F10). Probably mediates activation of barrier protective signaling responses in endothelial cells, triggered by coagulation factor Xa (F10). The polypeptide is Proteinase-activated receptor 2 (F2RL1) (Bos taurus (Bovine)).